Reading from the N-terminus, the 65-residue chain is Metallothionein-like protein type 3 (65 aa).

Belongs to the metallothionein superfamily. Type 15 family.

In terms of biological role, metallothioneins have a high content of cysteine residues that bind various heavy metals. This chain is Metallothionein-like protein type 3, found in Carica papaya (Papaya).